We begin with the raw amino-acid sequence, 164 residues long: Endoribonuclease YbeY (164 aa).

Positions 124, 128, and 134 each coordinate Zn(2+).

Belongs to the endoribonuclease YbeY family. Requires Zn(2+) as cofactor.

Its subcellular location is the cytoplasm. In terms of biological role, single strand-specific metallo-endoribonuclease involved in late-stage 70S ribosome quality control and in maturation of the 3' terminus of the 16S rRNA. The sequence is that of Endoribonuclease YbeY from Nitrosomonas europaea (strain ATCC 19718 / CIP 103999 / KCTC 2705 / NBRC 14298).